The primary structure comprises 213 residues: Uridine kinase (213 aa).

Position 14–21 (14–21 (GASASGKS)) interacts with ATP.

This sequence belongs to the uridine kinase family.

It localises to the cytoplasm. It catalyses the reaction uridine + ATP = UMP + ADP + H(+). The enzyme catalyses cytidine + ATP = CMP + ADP + H(+). Its pathway is pyrimidine metabolism; CTP biosynthesis via salvage pathway; CTP from cytidine: step 1/3. It participates in pyrimidine metabolism; UMP biosynthesis via salvage pathway; UMP from uridine: step 1/1. This Vibrio parahaemolyticus serotype O3:K6 (strain RIMD 2210633) protein is Uridine kinase.